Consider the following 79-residue polypeptide: Beta-hexatoxin-Mg1a (79 aa).

The N-terminal stretch at 1 to 20 (MKAPATTLILVMSLISVLWA) is a signal peptide. A propeptide spanning residues 21–50 (TPDLEEGDLLAELGDLIATDDEYPMKPEER) is cleaved from the precursor. Cystine bridges form between C52/C66, C59/C71, and C65/C76.

The protein belongs to the neurotoxin 15 family. 01 (magi-5) subfamily. As to expression, expressed by the venom gland.

The protein resides in the secreted. Functionally, insect and vertebrate active toxin. Binds to site 4 of mammalian voltage-gated sodium channels and shifts the activation voltage of the mammalian Nav1.2a/SCN2A channel to more hyperpolarized voltages, whereas the insect channel, DmNav1 (para), is not affected. Competes for binding at site 3 of the insect sodium channel. Causes temporary paralysis when injected into lepidopteran larvae at 8.6 nmol/g. A low intracranial injection dose into mice causes lacrimation, closure of the eyes and sweating. A high injection dose causes extensive lacrimation and death. The chain is Beta-hexatoxin-Mg1a from Macrothele gigas (Japanese funnel web spider).